A 177-amino-acid polypeptide reads, in one-letter code: Probable chemoreceptor glutamine deamidase CheD (177 aa).

The protein belongs to the CheD family.

The enzyme catalyses L-glutaminyl-[protein] + H2O = L-glutamyl-[protein] + NH4(+). Probably deamidates glutamine residues to glutamate on methyl-accepting chemotaxis receptors (MCPs), playing an important role in chemotaxis. The sequence is that of Probable chemoreceptor glutamine deamidase CheD from Pseudomonas syringae pv. syringae (strain B728a).